We begin with the raw amino-acid sequence, 218 residues long: Glutathione S-transferase Mu 2 (218 aa).

Residues 2-88 (PMTLGYWDIR…YLARKHNLCG (87 aa)) enclose the GST N-terminal domain. 7–8 (YW) serves as a coordination point for glutathione. S27 and S44 each carry phosphoserine. Glutathione contacts are provided by residues 43–46 (RSQW), K50, 59–60 (NL), and 72–73 (QS). Positions 90 to 208 (TEEERIRVDI…KSSRFLSKPI (119 aa)) constitute a GST C-terminal domain. Residue Y116 coordinates substrate. The residue at position 117 (S117) is a Phosphoserine.

Belongs to the GST superfamily. Mu family. Homodimer.

It localises to the cytoplasm. It catalyses the reaction RX + glutathione = an S-substituted glutathione + a halide anion + H(+). The enzyme catalyses 11(S)-hydroxy-14(S),15(S)-epoxy-(5Z,8Z,12E)-eicosatrienoate + glutathione = (11S,15S)-dihydroxy-14(R)-S-glutathionyl-(5Z,8Z,12E)-eicosatrienoate. In terms of biological role, conjugation of reduced glutathione to a wide number of exogenous and endogenous hydrophobic electrophiles. Participates in the formation of novel hepoxilin regioisomers. The sequence is that of Glutathione S-transferase Mu 2 from Mus musculus (Mouse).